A 156-amino-acid polypeptide reads, in one-letter code: Putative pre-16S rRNA nuclease (156 aa).

This sequence belongs to the YqgF nuclease family.

It is found in the cytoplasm. Its function is as follows. Could be a nuclease involved in processing of the 5'-end of pre-16S rRNA. This is Putative pre-16S rRNA nuclease from Phenylobacterium zucineum (strain HLK1).